We begin with the raw amino-acid sequence, 424 residues long: Putative polyketide beta-ketoacyl synthase 2 (424 aa).

Residues 13 to 416 (SRRAVVTGLG…GSNSALVLRR (404 aa)) form the Ketosynthase family 3 (KS3) domain.

The protein belongs to the thiolase-like superfamily. Beta-ketoacyl-ACP synthases family.

In terms of biological role, involved in developmentally regulated synthesis of a compound biosynthetically related to polyketide antibiotics which is essential for spore color in Streptomyces coelicolor. The protein is Putative polyketide beta-ketoacyl synthase 2 of Streptomyces coelicolor (strain ATCC BAA-471 / A3(2) / M145).